The following is a 1481-amino-acid chain: Cystic fibrosis transmembrane conductance regulator (1481 aa).

At 1–77 the chain is on the cytoplasmic side; that stretch reads MQRSPLEKAS…KLINALRRCF (77 aa). Residues 78–98 traverse the membrane as a helical segment; it reads FWRFMFYGILLYLGEVTKAVQ. Residues 81–365 form the ABC transmembrane type-1 1 domain; sequence FMFYGILLYL…WAVQTWYDSL (285 aa). Residues 99–122 lie on the Extracellular side of the membrane; the sequence is PLLLGRIIASYDPDNKEERSIAIY. Residues 123-146 form a helical membrane-spanning segment; sequence LGIGLCLLFIVRTLLLHPAIFGLH. Residues 147-195 are Cytoplasmic-facing; that stretch reads HIGMQMRIAMFSLIYKKTLKLSSRVLDKISIGQLVSLLSNNLNKFDEGL. A helical transmembrane segment spans residues 196–216; the sequence is ALAHFVWIVPLQVALLMGLIW. Over 217–222 the chain is Extracellular; that stretch reads ELLQAS. Residues 223 to 243 traverse the membrane as a helical segment; the sequence is AFCGLGFLIVLALFQAGLGRM. Residues 244–298 are Cytoplasmic-facing; the sequence is MMKYRDQRAGKINERLVITSEMIENIQSVKAYCWEEAMEKMIENLRQTELKLTRK. Residues 299 to 319 form a helical membrane-spanning segment; that stretch reads AAYVRYFNSSAFFFSGFFVVF. At 320 to 339 the chain is on the extracellular side; sequence LSVLPYALIKGIVLRKIFTT. A helical transmembrane segment spans residues 340–358; it reads ISFCIVLRMAVTRQFPWAV. Topologically, residues 359–858 are cytoplasmic; that stretch reads QTWYDSLGAI…YLRYITVHKS (500 aa). Residues Trp-401, Ser-434, 458–465, and Gln-493 each bind ATP; that span reads GSTGAGKT. The 224-residue stretch at 423-646 folds into the ABC transporter 1 domain; it reads NDDDSLFFSN…RPDFSSKLMG (224 aa). The S-palmitoyl cysteine moiety is linked to residue Cys-524. Residues Ser-549 and Ser-660 each carry the phosphoserine modification. Residues 654 to 831 are disordered R region; sequence SAERRNSILT…EEINEEDLKE (178 aa). Ser-670 bears the Phosphoserine; by PKA mark. Phosphoserine is present on Ser-686. Residue Lys-688 forms a Glycyl lysine isopeptide (Lys-Gly) (interchain with G-Cter in ubiquitin) linkage. 2 positions are modified to phosphoserine: Ser-700 and Ser-712. Thr-717 carries the phosphothreonine modification. Phosphoserine occurs at positions 737, 753, 768, 790, 795, and 813. Residues 859 to 879 traverse the membrane as a helical segment; sequence LIFVLIWCLVIFLAEVAASLV. In terms of domain architecture, ABC transmembrane type-1 2 spans 859–1155; the sequence is LIFVLIWCLV…AVNSSIDVDS (297 aa). Over 880 to 918 the chain is Extracellular; it reads VLWFLGNTPPQDKGNSTYSRNNSYAVIITRTSSYYVFYI. N-linked (GlcNAc...) asparagine glycans are attached at residues Asn-894 and Asn-900. A discontinuously helical membrane pass occupies residues 919–939; it reads YVGVADTLLAMGFFRGLPLVH. Residues 940-990 are Cytoplasmic-facing; that stretch reads TLITVSKILHHKMLHSVLQAPMSTLNTLKAGGILNRFSKDIAILDDLLPLT. A helical transmembrane segment spans residues 991-1011; that stretch reads IFDFIQLLLIVIGAIAVVAVL. Topologically, residues 1012–1013 are extracellular; the sequence is QP. A helical membrane pass occupies residues 1014-1034; that stretch reads YIFVATVPVIVAFIMLRAYFL. Over 1035-1095 the chain is Cytoplasmic; the sequence is QTSQQLKQLE…TANWFLYLST (61 aa). Residues 1096 to 1116 form a helical membrane-spanning segment; the sequence is LRWFQMRIEMIFVIFFIAVTF. Residues 1117–1130 are Extracellular-facing; the sequence is ISILTTGEGEGTVG. The chain crosses the membrane as a helical span at residues 1131-1151; the sequence is IILTLAMNIMSTLQWAVNSSI. The Cytoplasmic portion of the chain corresponds to 1152–1481; that stretch reads DVDSLMRSVS…TEEEVQDTRL (330 aa). The ABC transporter 2 domain maps to 1211–1444; sequence MTVKDLTAKY…RSLFRQAISP (234 aa). ATP contacts are provided by residues Tyr-1220 and 1245–1252; that span reads GRTGSGKS. The interaction with GORASP2 stretch occupies residues 1387-1481; that stretch reads RTLKQAFADC…TEEEVQDTRL (95 aa). Cys-1396 carries S-palmitoyl cysteine lipidation. Residues Ser-1445 and Ser-1457 each carry the phosphoserine modification. Positions 1462-1481 are disordered; that stretch reads QPQIAALKEETEEEVQDTRL. The segment covering 1471–1481 has biased composition (acidic residues); it reads ETEEEVQDTRL. A PDZ-binding motif is present at residues 1479–1481; the sequence is TRL.

It belongs to the ABC transporter superfamily. ABCC family. CFTR transporter (TC 3.A.1.202) subfamily. As to quaternary structure, monomer; does not require oligomerization for channel activity. May form oligomers in the membrane. Interacts with SLC26A3, SLC26A6 and NHERF1. Interacts with SHANK2. Interacts with MYO6. Interacts (via C-terminus) with GOPC (via PDZ domain); this promotes CFTR internalization and thereby decreases channel activity. Interacts with SLC4A7 through NHERF1. Found in a complex with MYO5B and RAB11A. Interacts with ANO1. Interacts with SLC26A8. Interacts with AHCYL1; the interaction increases CFTR activity. Interacts with CSE1L. The core-glycosylated form interacts with GORASP2 (via PDZ GRASP-type 1 domain) in respone to ER stress. Interacts with MARCHF2; the interaction leads to CFTR ubiqtuitination and degradation. Interacts with ADGRG2. Post-translationally, N-glycosylated. In terms of processing, phosphorylated; cAMP treatment promotes phosphorylation and activates the channel. Dephosphorylation decreases the ATPase activity (in vitro). Phosphorylation at PKA sites activates the channel. Phosphorylation at PKC sites enhances the response to phosphorylation by PKA. Phosphorylated by AMPK; this inhibits channel activity. Ubiquitinated, leading to its degradation in the lysosome. Deubiquitination by USP10 in early endosomes enhances its endocytic recycling to the cell membrane. Ubiquitinated by RNF185 during ER stress. Ubiquitinated by MARCHF2.

The protein localises to the apical cell membrane. The protein resides in the early endosome membrane. It is found in the cell membrane. It localises to the recycling endosome membrane. Its subcellular location is the endoplasmic reticulum membrane. The protein localises to the nucleus. The enzyme catalyses ATP + H2O + closed Cl(-) channel = ADP + phosphate + open Cl(-) channel.. It catalyses the reaction chloride(in) = chloride(out). The catalysed reaction is hydrogencarbonate(in) = hydrogencarbonate(out). It carries out the reaction ATP + H2O = ADP + phosphate + H(+). Epithelial ion channel that plays an important role in the regulation of epithelial ion and water transport and fluid homeostasis. Mediates the transport of chloride ions across the cell membrane. Possesses an intrinsic ATPase activity and utilizes ATP to gate its channel; the passive flow of anions through the channel is gated by cycles of ATP binding and hydrolysis by the ATP-binding domains. The ion channel is also permeable to HCO(3)(-); selectivity depends on the extracellular chloride concentration. Exerts its function also by modulating the activity of other ion channels and transporters. Contributes to the regulation of the pH and the ion content of the epithelial fluid layer. Modulates the activity of the epithelial sodium channel (ENaC) complex, in part by regulating the cell surface expression of the ENaC complex. May regulate bicarbonate secretion and salvage in epithelial cells by regulating the transporter SLC4A7. Can inhibit the chloride channel activity of ANO1. Plays a role in the chloride and bicarbonate homeostasis during sperm epididymal maturation and capacitation. In Papio anubis (Olive baboon), this protein is Cystic fibrosis transmembrane conductance regulator.